Reading from the N-terminus, the 591-residue chain is Trihelix transcription factor PTL (591 aa).

The disordered stretch occupies residues 1 to 32 (MDQDQHPQYGIPELRQLMKGGGRTTTTTPSTS). The 60-residue stretch at 118-177 (GRWPRQETLTLLEIRSRLDHKFKEANQKGPLWDEVSRIMSEEHGYQRSGKKCREKFENLY) folds into the Myb-like 1 domain. Positions 380–410 (CSSPEERTNGNNEIRNNSETQNENGSDQTMT) are disordered. Residues 388–410 (NGNNEIRNNSETQNENGSDQTMT) are compositionally biased toward polar residues. One can recognise a Myb-like 2 domain in the interval 422 to 479 (WGEQEILKLMEIRTSMDSTFQEILGGCSDEFLWEEIAAKLIQLGFDQRSALLCKEKWE). The segment at 491–551 (QINKKRKDNS…SNANANANVT (61 aa)) is disordered. Residues 515–534 (IYNNRESGYNDNDPHQINEQ) show a composition bias toward polar residues. A compositionally biased stretch (low complexity) spans 535–551 (GNVGSSTSNANANANVT).

As to quaternary structure, interacts with KIN10. Confined to flowers, at low levels. Also present in 7-days-old seedlings. Barely detectable in other tissues such as young seedlings, roots, stems, leaves and siliques. Expressed in flower primordia, more precisely between newly arisen sepal primordia and also at the basal margins of developing sepals.

It localises to the nucleus. Functionally, transcription factor that prevents growth. Regulates perianth architecture in flower, mostly in the second whorl, probably by suppressing growth between initiating sepals, ensuring that they remain separate, and by modulating organ shapes. Required for the establishment of auxin flux. The chain is Trihelix transcription factor PTL (PTL) from Arabidopsis thaliana (Mouse-ear cress).